We begin with the raw amino-acid sequence, 113 residues long: Cytochrome c2 (113 aa).

Heme c contacts are provided by C15, C18, H19, and M92.

It belongs to the cytochrome c family. Binds 1 heme c group covalently per subunit.

Cytochrome c2 is found mainly in purple, non-sulfur, photosynthetic bacteria where it functions as the electron donor to the oxidized bacteriochlorophyll in the photophosphorylation pathway. However, it may also have a role in the respiratory chain and is found in some non-photosynthetic bacteria. The sequence is that of Cytochrome c2 from Pararhodospirillum photometricum (Rhodospirillum photometricum).